We begin with the raw amino-acid sequence, 53 residues long: Mannose/glucose-specific lectin alpha chain (53 aa).

Belongs to the leguminous lectin family. As to quaternary structure, heterodimer of an alpha and a beta chain.

This lectin specifically binds mannose and glucose. The chain is Mannose/glucose-specific lectin alpha chain from Vicia cracca (Bird vetch).